The primary structure comprises 194 residues: Putative manganese efflux pump MntP (194 aa).

A run of 6 helical transmembrane segments spans residues 3–23 (PITILLIGIAMSTDAFAAAIG), 37–57 (LYVAVIFGVIETATPIAGWLL), 65–85 (IATFDHWIAFGLLSGLGIHMI), 112–132 (LAATALATSIDAAAIGISLAF), 139–159 (IVAAVIGLCTFTMVIFGVMLG), and 170–190 (AEIVGGIILIIVGSTILYEHL).

The protein belongs to the MntP (TC 9.B.29) family.

It localises to the cell inner membrane. Its function is as follows. Probably functions as a manganese efflux pump. This chain is Putative manganese efflux pump MntP, found in Xylella fastidiosa (strain 9a5c).